Reading from the N-terminus, the 372-residue chain is UDP-N-acetylglucosamine--N-acetylmuramyl-(pentapeptide) pyrophosphoryl-undecaprenol N-acetylglucosamine transferase (372 aa).

Residues 16–18 (TGG), N128, R164, S192, I250, and Q295 each bind UDP-N-acetyl-alpha-D-glucosamine.

This sequence belongs to the glycosyltransferase 28 family. MurG subfamily.

It is found in the cell inner membrane. It catalyses the reaction di-trans,octa-cis-undecaprenyl diphospho-N-acetyl-alpha-D-muramoyl-L-alanyl-D-glutamyl-meso-2,6-diaminopimeloyl-D-alanyl-D-alanine + UDP-N-acetyl-alpha-D-glucosamine = di-trans,octa-cis-undecaprenyl diphospho-[N-acetyl-alpha-D-glucosaminyl-(1-&gt;4)]-N-acetyl-alpha-D-muramoyl-L-alanyl-D-glutamyl-meso-2,6-diaminopimeloyl-D-alanyl-D-alanine + UDP + H(+). It functions in the pathway cell wall biogenesis; peptidoglycan biosynthesis. Cell wall formation. Catalyzes the transfer of a GlcNAc subunit on undecaprenyl-pyrophosphoryl-MurNAc-pentapeptide (lipid intermediate I) to form undecaprenyl-pyrophosphoryl-MurNAc-(pentapeptide)GlcNAc (lipid intermediate II). The protein is UDP-N-acetylglucosamine--N-acetylmuramyl-(pentapeptide) pyrophosphoryl-undecaprenol N-acetylglucosamine transferase of Paraburkholderia xenovorans (strain LB400).